The chain runs to 118 residues: Urease subunit beta (118 aa).

The protein belongs to the urease beta subunit family. As to quaternary structure, heterotrimer of UreA (gamma), UreB (beta) and UreC (alpha) subunits. Three heterotrimers associate to form the active enzyme.

The protein localises to the cytoplasm. It catalyses the reaction urea + 2 H2O + H(+) = hydrogencarbonate + 2 NH4(+). It participates in nitrogen metabolism; urea degradation; CO(2) and NH(3) from urea (urease route): step 1/1. This is Urease subunit beta from Aliivibrio fischeri (strain ATCC 700601 / ES114) (Vibrio fischeri).